The primary structure comprises 432 residues: Alpha-galactosidase (432 aa).

An NAD(+)-binding site is contributed by 2 to 68; it reads KKITFIGAGS…PSVAINSYDD (67 aa). Asn-148 contributes to the substrate binding site. A Mn(2+)-binding site is contributed by Cys-169. His-170 serves as the catalytic Proton donor. His-199 provides a ligand contact to Mn(2+).

The protein belongs to the glycosyl hydrolase 4 family. Homodimer. It depends on Mn(2+) as a cofactor. NAD(+) is required as a cofactor.

It localises to the cytoplasm. The catalysed reaction is Hydrolysis of terminal, non-reducing alpha-D-galactose residues in alpha-D-galactosides, including galactose oligosaccharides, galactomannans and galactolipids.. Its function is as follows. Catalyzes the hydrolysis of melibiose and alpha-galactosides of the raffinose family of oligosaccharides (RFOs) such as raffinose and stachyose. Cannot act on polymeric substrates such as locust bean gum. The sequence is that of Alpha-galactosidase from Bacillus subtilis (strain 168).